A 185-amino-acid polypeptide reads, in one-letter code: MAEEKQKPRMKVHYVGVIRKILQEKFHYKNEMQIPRVDKIVINMGIGEATSDSKKPSIAAGDLSLITGQKAVVTYASSSIAGFKVREGMPLGAKVTLRKDRMFEFLDRLVTIALPRVRDFRGLNPKSFDGRGNFAMGIKEHIVFPEINYDKVDQIWGMDIIVCTTAKTDDEARELLRAFNFPFRS.

The protein belongs to the universal ribosomal protein uL5 family. In terms of assembly, part of the 50S ribosomal subunit; part of the 5S rRNA/L5/L18/L25 subcomplex. Contacts the 5S rRNA and the P site tRNA. Forms a bridge to the 30S subunit in the 70S ribosome.

In terms of biological role, this is one of the proteins that bind and probably mediate the attachment of the 5S RNA into the large ribosomal subunit, where it forms part of the central protuberance. In the 70S ribosome it contacts protein S13 of the 30S subunit (bridge B1b), connecting the 2 subunits; this bridge is implicated in subunit movement. Contacts the P site tRNA; the 5S rRNA and some of its associated proteins might help stabilize positioning of ribosome-bound tRNAs. In Bartonella bacilliformis (strain ATCC 35685 / KC583 / Herrer 020/F12,63), this protein is Large ribosomal subunit protein uL5.